The sequence spans 259 residues: Mediator of RNA polymerase II transcription subunit 7 (259 aa).

Disordered regions lie at residues 1-52 (MAEP…EWSP), 99-118 (TQLY…SSQP), and 223-242 (GSTI…EDQI). The span at 31–44 (ENIKKEASKGEDGR) shows a compositional bias: basic and acidic residues. A compositionally biased stretch (basic and acidic residues) spans 230-242 (TKDKKGVKPEDQI).

This sequence belongs to the Mediator complex subunit 7 family. Component of the Mediator complex.

It is found in the nucleus. Functionally, component of the Mediator complex, a coactivator involved in the regulated transcription of nearly all RNA polymerase II-dependent genes. Mediator functions as a bridge to convey information from gene-specific regulatory proteins to the basal RNA polymerase II transcription machinery. Mediator is recruited to promoters by direct interactions with regulatory proteins and serves as a scaffold for the assembly of a functional preinitiation complex with RNA polymerase II and the general transcription factors. The protein is Mediator of RNA polymerase II transcription subunit 7 (med7) of Emericella nidulans (strain FGSC A4 / ATCC 38163 / CBS 112.46 / NRRL 194 / M139) (Aspergillus nidulans).